Here is a 430-residue protein sequence, read N- to C-terminus: Serine hydroxymethyltransferase (430 aa).

(6S)-5,6,7,8-tetrahydrofolate is bound by residues Leu-123 and 127-129 (GHL). Position 232 is an N6-(pyridoxal phosphate)lysine (Lys-232). (6S)-5,6,7,8-tetrahydrofolate is bound at residue Glu-248.

It belongs to the SHMT family. In terms of assembly, homodimer. Pyridoxal 5'-phosphate is required as a cofactor.

It is found in the cytoplasm. It carries out the reaction (6R)-5,10-methylene-5,6,7,8-tetrahydrofolate + glycine + H2O = (6S)-5,6,7,8-tetrahydrofolate + L-serine. It participates in one-carbon metabolism; tetrahydrofolate interconversion. It functions in the pathway amino-acid biosynthesis; glycine biosynthesis; glycine from L-serine: step 1/1. Its function is as follows. Catalyzes the reversible interconversion of serine and glycine with tetrahydrofolate (THF) serving as the one-carbon carrier. This reaction serves as the major source of one-carbon groups required for the biosynthesis of purines, thymidylate, methionine, and other important biomolecules. Also exhibits THF-independent aldolase activity toward beta-hydroxyamino acids, producing glycine and aldehydes, via a retro-aldol mechanism. This is Serine hydroxymethyltransferase from Anaplasma marginale (strain St. Maries).